The sequence spans 609 residues: Isopenicillin N epimerase component 1 (609 aa).

Residue 185 to 196 coordinates AMP; it reads MLSGSGTTGLPK. Positions 545-570 are disordered; the sequence is STDNHKHNKVPLRDEGVDPRSMGSKV.

It belongs to the ATP-dependent AMP-binding enzyme family.

It carries out the reaction isopenicillin N = penicillin N. Its pathway is antibiotic biosynthesis; cephalosporin C biosynthesis. Its function is as follows. Together with cefD2, catalyzes the reversible isomerization between isopenicillin N and penicillin N. This two-component IPN epimerase system may function by two sequential steps, an activation of isopenicillin N by the acyl-CoA synthase component cefD1, followed by epimerization by the acyl-CoA racemase component cefD2. The sequence is that of Isopenicillin N epimerase component 1 (cefD1) from Hapsidospora chrysogena (Acremonium chrysogenum).